The chain runs to 186 residues: MGDKLLDPTQIINGLAVMLSFFVGYRYALKRGDAKDSVTEGAATPFSQESSVSSGSEASVSDKGYGGLNDNFKMVLVVRNDLKMGKGKIAAQCGHGAVGAYQRAVVRTPRLLRSWENCGCAKIAVRVESEAELMAIKKEAERQQLNTCLIRDAGRTQIEANSKTVLAVGPAAAADIDRVTGHLKLL.

Belongs to the PTH2 family.

The enzyme catalyses an N-acyl-L-alpha-aminoacyl-tRNA + H2O = an N-acyl-L-amino acid + a tRNA + H(+). Its function is as follows. The natural substrate for this enzyme may be peptidyl-tRNAs which drop off the ribosome during protein synthesis. This is Probable peptidyl-tRNA hydrolase 2 from Drosophila melanogaster (Fruit fly).